A 150-amino-acid polypeptide reads, in one-letter code: UPF0336 protein SCO4636 (150 aa).

Positions V8–A116 constitute a MaoC-like domain.

Belongs to the UPF0336 family.

This chain is UPF0336 protein SCO4636, found in Streptomyces coelicolor (strain ATCC BAA-471 / A3(2) / M145).